The sequence spans 197 residues: Recombination protein RecR (197 aa).

Residues 57–72 form a C4-type zinc finger; sequence CSTCFGITESDPCHLC. The region spanning 79–174 is the Toprim domain; it reads ASICVVEEPQ…KVTRLAHGIP (96 aa).

The protein belongs to the RecR family.

Its function is as follows. May play a role in DNA repair. It seems to be involved in an RecBC-independent recombinational process of DNA repair. It may act with RecF and RecO. In Geotalea uraniireducens (strain Rf4) (Geobacter uraniireducens), this protein is Recombination protein RecR.